The primary structure comprises 437 residues: Eukaryotic peptide chain release factor subunit 1 (437 aa).

The short motif at 61–64 is the NIKS motif; plays an important role in translational termination element; sequence NIKS.

This sequence belongs to the eukaryotic release factor 1 family. Component of the eRF1-eRF3-GTP ternary complex, composed of ETF1/ERF1 and eRF3 (GSPT1/ERF3A or GSPT2/ERF3B) and GTP.

The protein resides in the cytoplasm. Component of the eRF1-eRF3-GTP ternary complex, a ternary complex that mediates translation termination in response to the termination codons. The eRF1-eRF3-GTP complex binds to a stop codon in the ribosomal A-site. ETF1/ERF1 is responsible for stop codon recognition and inducing hydrolysis of peptidyl-tRNA. Following GTP hydrolysis, eRF3 (GSPT1/ERF3A or GSPT2/ERF3B) dissociates, permitting ETF1/eRF1 to accommodate fully in the A-site, followed by hydrolysis of peptidyl-tRNA. The sequence is that of Eukaryotic peptide chain release factor subunit 1 (etf1) from Xenopus tropicalis (Western clawed frog).